A 266-amino-acid chain; its full sequence is Dioicin-2 (266 aa).

Cystine bridges form between Cys-32-Cys-263 and Cys-85-Cys-102. Glu-176 is an active-site residue.

Its subcellular location is the secreted. The protein localises to the extracellular space. It is found in the golgi apparatus. It localises to the vacuole. The catalysed reaction is Endohydrolysis of the N-glycosidic bond at one specific adenosine on the 28S rRNA.. Nicks pBR322 dsDNA. Has adenine polynucleotide glycosidase activity on herring sperm ssDNA. This Phytolacca dioica (Bella sombra tree) protein is Dioicin-2.